The following is a 327-amino-acid chain: DNA-directed RNA polymerase subunit alpha (327 aa).

Residues 1–242 (MRKFLKYQLD…AHLEPIVNID (242 aa)) are alpha N-terminal domain (alpha-NTD). An alpha C-terminal domain (alpha-CTD) region spans residues 259-327 (KRQNASISID…TERSLELKKD (69 aa)).

The protein belongs to the RNA polymerase alpha chain family. Homodimer. The RNAP catalytic core consists of 2 alpha, 1 beta, 1 beta' and 1 omega subunit. When a sigma factor is associated with the core the holoenzyme is formed, which can initiate transcription.

The enzyme catalyses RNA(n) + a ribonucleoside 5'-triphosphate = RNA(n+1) + diphosphate. Its function is as follows. DNA-dependent RNA polymerase catalyzes the transcription of DNA into RNA using the four ribonucleoside triphosphates as substrates. This is DNA-directed RNA polymerase subunit alpha from Ureaplasma parvum serovar 3 (strain ATCC 700970).